The chain runs to 331 residues: Probable allantoicase (331 aa).

It belongs to the allantoicase family.

It carries out the reaction allantoate + H2O = (S)-ureidoglycolate + urea. It participates in nitrogen metabolism; (S)-allantoin degradation; (S)-ureidoglycolate from allantoate (aminidohydrolase route): step 1/1. The chain is Probable allantoicase from Pseudomonas fluorescens (strain ATCC BAA-477 / NRRL B-23932 / Pf-5).